Here is a 291-residue protein sequence, read N- to C-terminus: Beta-lactamase CTX-M-1 (291 aa).

Residues 1-28 form the signal peptide; sequence MVKKSLRQFTLMATATVTLLLGSVPLYA. Serine 73 acts as the Nucleophile; acyl-ester intermediate in catalysis. A beta-lactam contacts are provided by lysine 76, serine 133, glutamate 169, and serine 240. Glutamate 169 acts as the Proton acceptor in catalysis.

It belongs to the class-A beta-lactamase family. Monomer.

Its subcellular location is the secreted. It carries out the reaction a beta-lactam + H2O = a substituted beta-amino acid. With respect to regulation, inhibited by the beta-lactamase-blocking agent clavulanic acid; in the TG1 strain. Functionally, extended-spectrum beta-lactamase (ESBL) which confers resistance to penicillins, as well as first, second and third-generation cephalosporins. Has cefotaxime-hydrolyzing activity. Inactive against the cephamycin antibiotic, cefoxitin, or against the carbapenem, imipenem. In Escherichia coli, this protein is Beta-lactamase CTX-M-1.